A 478-amino-acid polypeptide reads, in one-letter code: MEKHLRLAPSPTGLLHIGTARTALFNWLYARKINGKFLIRIEDTDIVRSKSEYTTNILNGLNWLGLNWDEEPINQSKRVSVHKNYIKRLLESGAAYRCFTSESEILDLREKQKKSGLPPKHDNRHRNLTRKEIKEFISQGKSSVIRFKIDEETEIKWEDQIRGEIKWQGKDLGGDLVLSRRALGDEIGNPLYNLAVVVDDNFMNITHVVRGEDHISNTAKQILIYKALNFKLPIFAHTPLILNSEGKKLSKRDSVTSIDEFKEMGYLPEALANYMAFLGWSIKSPESEILSLSEISKVFNLSDVNKAGAKFNWEKLNWINSQYIKKMELTQLCKFIKKYWEEMGWESPSSEWDLKLTNLIQDSMILLKDAIDQSKPFFILSQMKKEGEEFLESKKEVKESLKYILFYLKEANITKVNKDNAREIINKIIVNHSIKKGILMKSLRVAFFGCLSGPDLIQSWELFSENKIDIPLIERCFN.

The 'HIGH' region motif lies at 9–19 (PSPTGLLHIGT). Residues 248–252 (KLSKR) carry the 'KMSKS' region motif. Lys-251 provides a ligand contact to ATP.

Belongs to the class-I aminoacyl-tRNA synthetase family. Glutamate--tRNA ligase type 1 subfamily. Monomer.

It is found in the cytoplasm. The catalysed reaction is tRNA(Glu) + L-glutamate + ATP = L-glutamyl-tRNA(Glu) + AMP + diphosphate. In terms of biological role, catalyzes the attachment of glutamate to tRNA(Glu) in a two-step reaction: glutamate is first activated by ATP to form Glu-AMP and then transferred to the acceptor end of tRNA(Glu). The chain is Glutamate--tRNA ligase from Prochlorococcus marinus subsp. pastoris (strain CCMP1986 / NIES-2087 / MED4).